We begin with the raw amino-acid sequence, 245 residues long: Orotidine 5'-phosphate decarboxylase (245 aa).

Substrate contacts are provided by residues D22, K44, 71 to 80, T131, R192, Q201, G221, and R222; that span reads DLKFHDIPNT. The active-site Proton donor is K73.

Belongs to the OMP decarboxylase family. Type 1 subfamily. As to quaternary structure, homodimer.

It carries out the reaction orotidine 5'-phosphate + H(+) = UMP + CO2. It functions in the pathway pyrimidine metabolism; UMP biosynthesis via de novo pathway; UMP from orotate: step 2/2. Functionally, catalyzes the decarboxylation of orotidine 5'-monophosphate (OMP) to uridine 5'-monophosphate (UMP). This is Orotidine 5'-phosphate decarboxylase from Escherichia fergusonii (strain ATCC 35469 / DSM 13698 / CCUG 18766 / IAM 14443 / JCM 21226 / LMG 7866 / NBRC 102419 / NCTC 12128 / CDC 0568-73).